We begin with the raw amino-acid sequence, 702 residues long: Polyribonucleotide nucleotidyltransferase (702 aa).

Mg(2+)-binding residues include D485 and D491. Residues 552–612 enclose the KH domain; that stretch reads PRTEIICIDP…EGVKKAISII (61 aa). In terms of domain architecture, S1 motif spans 622–690; it reads GEIYLGKVTK…NQGRINLSRK (69 aa).

It belongs to the polyribonucleotide nucleotidyltransferase family. It depends on Mg(2+) as a cofactor.

Its subcellular location is the cytoplasm. The enzyme catalyses RNA(n+1) + phosphate = RNA(n) + a ribonucleoside 5'-diphosphate. Functionally, involved in mRNA degradation. Catalyzes the phosphorolysis of single-stranded polyribonucleotides processively in the 3'- to 5'-direction. In Clostridium botulinum (strain Kyoto / Type A2), this protein is Polyribonucleotide nucleotidyltransferase.